Reading from the N-terminus, the 239-residue chain is Ribosomal RNA small subunit methyltransferase G (239 aa).

Residues Gly-79, Phe-84, 130–131, and Arg-149 each bind S-adenosyl-L-methionine; that span reads AE.

This sequence belongs to the methyltransferase superfamily. RNA methyltransferase RsmG family.

The protein localises to the cytoplasm. Its function is as follows. Specifically methylates the N7 position of a guanine in 16S rRNA. This is Ribosomal RNA small subunit methyltransferase G from Lactobacillus johnsonii (strain CNCM I-12250 / La1 / NCC 533).